Consider the following 95-residue polypeptide: Small ribosomal subunit protein bS6 (95 aa).

It belongs to the bacterial ribosomal protein bS6 family.

Functionally, binds together with bS18 to 16S ribosomal RNA. The polypeptide is Small ribosomal subunit protein bS6 (Nocardia farcinica (strain IFM 10152)).